Consider the following 116-residue polypeptide: Small ribosomal subunit protein uS11m (116 aa).

Belongs to the universal ribosomal protein uS11 family.

It is found in the mitochondrion. This Chondrus crispus (Carrageen Irish moss) protein is Small ribosomal subunit protein uS11m (RPS11).